The following is a 379-amino-acid chain: 1-deoxy-D-xylulose 5-phosphate reductoisomerase (379 aa).

5 residues coordinate NADPH: T10, G11, S12, V13, and N121. K122 contributes to the 1-deoxy-D-xylulose 5-phosphate binding site. An NADPH-binding site is contributed by E123. Mn(2+) is bound at residue D147. 4 residues coordinate 1-deoxy-D-xylulose 5-phosphate: S148, E149, S173, and H196. Mn(2+) is bound at residue E149. G202 contacts NADPH. Residues S209, N214, K215, and E218 each coordinate 1-deoxy-D-xylulose 5-phosphate. E218 contacts Mn(2+).

This sequence belongs to the DXR family. It depends on Mg(2+) as a cofactor. Mn(2+) is required as a cofactor.

The catalysed reaction is 2-C-methyl-D-erythritol 4-phosphate + NADP(+) = 1-deoxy-D-xylulose 5-phosphate + NADPH + H(+). It functions in the pathway isoprenoid biosynthesis; isopentenyl diphosphate biosynthesis via DXP pathway; isopentenyl diphosphate from 1-deoxy-D-xylulose 5-phosphate: step 1/6. Its function is as follows. Catalyzes the NADPH-dependent rearrangement and reduction of 1-deoxy-D-xylulose-5-phosphate (DXP) to 2-C-methyl-D-erythritol 4-phosphate (MEP). The polypeptide is 1-deoxy-D-xylulose 5-phosphate reductoisomerase (Chlamydia abortus (strain DSM 27085 / S26/3) (Chlamydophila abortus)).